Here is a 340-residue protein sequence, read N- to C-terminus: Pseudaminic acid synthase (340 aa).

The AFP-like domain occupies 281-337; that stretch reads SLFVIKDIQKGEALTENNIKALRPNLGLHPKFYKEILGQKASKFLKANTPLSADDIE.

It belongs to the pseudaminic acid synthase family. A divalent metal cation serves as cofactor.

It carries out the reaction 2,4-diacetamido-2,4,6-trideoxy-beta-L-altrose + phosphoenolpyruvate + H2O = pseudaminate + phosphate. Functionally, catalyzes the fifth step in the biosynthesis of pseudaminic acid, a sialic-acid-like sugar that is used to modify flagellin. Catalyzes the condensation of phosphoenolpyruvate with 2,4-diacetamido-2,4,6-trideoxy-beta-l-altropyranose, forming pseudaminic acid. The polypeptide is Pseudaminic acid synthase (pseI) (Helicobacter pylori (strain ATCC 700392 / 26695) (Campylobacter pylori)).